Consider the following 344-residue polypeptide: Small ribosomal subunit protein uS3 (344 aa).

Residues 38 to 106 (LKAALRERLK…EVFIDIQEVH (69 aa)) form the KH type-2 domain. Residues 217-344 (PEPEPRREQR…QKPEGSGENQ (128 aa)) are disordered. 2 stretches are compositionally biased toward basic and acidic residues: residues 219–259 (PEPR…RGDR) and 335–344 (QKPEGSGENQ).

It belongs to the universal ribosomal protein uS3 family. As to quaternary structure, part of the 30S ribosomal subunit. Forms a tight complex with proteins S10 and S14.

In terms of biological role, binds the lower part of the 30S subunit head. Binds mRNA in the 70S ribosome, positioning it for translation. The protein is Small ribosomal subunit protein uS3 of Solibacter usitatus (strain Ellin6076).